The sequence spans 31 residues: Histone H1.3 (31 aa).

Belongs to the histone H1/H5 family.

It is found in the nucleus. The protein localises to the chromosome. Its function is as follows. Histones H1 are necessary for the condensation of nucleosome chains into higher-order structures. This chain is Histone H1.3, found in Triticum aestivum (Wheat).